Consider the following 1104-residue polypeptide: DNA polymerase delta catalytic subunit (1104 aa).

A disordered region spans residues 1 to 60 (MKRSIVTGGGNNDKKFKAQPPPKNNYRGGGDDEEDDEFEEDDDEDEGDEFGEEEDEDDID). Residues 31–60 (DDEEDDEFEEDDDEDEGDEFGEEEDEDDID) are compositionally biased toward acidic residues. C1012, C1015, C1027, and C1030 together coordinate Zn(2+). The CysA-type zinc finger occupies 1012 to 1030 (CMNCPKELTDTESTTCINC). [4Fe-4S] cluster contacts are provided by C1059, C1062, C1072, and C1077. The short motif at 1059 to 1077 (CQRCSGSLHQPVLCSNRDC) is the CysB motif element.

The protein belongs to the DNA polymerase type-B family. In terms of assembly, heterotetramer composed of subunits of 125 kDa, 50 kDa, 66 kDa and 12 kDa. The 125 kDa subunit contains the polymerase active site and most likely the active site for the 3'-5' exonuclease activity. Requires [4Fe-4S] cluster as cofactor.

The protein localises to the nucleus. It catalyses the reaction DNA(n) + a 2'-deoxyribonucleoside 5'-triphosphate = DNA(n+1) + diphosphate. In terms of biological role, possesses two enzymatic activities: DNA synthesis (polymerase) and an exonucleolytic activity that degrades single stranded DNA in the 3'- to 5'-direction. The chain is DNA polymerase delta catalytic subunit (pold1) from Dictyostelium discoideum (Social amoeba).